Consider the following 1442-residue polypeptide: Cleavage and polyadenylation specificity factor subunit 1 (1442 aa).

Belongs to the CPSF1 family. Component of the CPSF complex, at least composed of CPSF160, CPSF100, CPSF73-I, CPSF73-II, CPSF30, FY and FIPS5. Forms a complex with cleavage and polyadenylation specificity factor (CPSF) subunits FY, CPSF30, CPSF73-I, CPSF 73-II and CPSF100.

The protein resides in the nucleus. CPSF plays a key role in pre-mRNA 3'-end formation, recognizing the AAUAAA signal sequence and interacting with poly(A)polymerase and other factors to bring about cleavage and poly(A) addition. This subunit is involved in the RNA recognition step of the polyadenylation reaction. The protein is Cleavage and polyadenylation specificity factor subunit 1 (CPSF160) of Arabidopsis thaliana (Mouse-ear cress).